Consider the following 299-residue polypeptide: ATP phosphoribosyltransferase (299 aa).

Belongs to the ATP phosphoribosyltransferase family. Long subfamily. Requires Mg(2+) as cofactor.

The protein localises to the cytoplasm. It catalyses the reaction 1-(5-phospho-beta-D-ribosyl)-ATP + diphosphate = 5-phospho-alpha-D-ribose 1-diphosphate + ATP. The protein operates within amino-acid biosynthesis; L-histidine biosynthesis; L-histidine from 5-phospho-alpha-D-ribose 1-diphosphate: step 1/9. With respect to regulation, feedback inhibited by histidine. In terms of biological role, catalyzes the condensation of ATP and 5-phosphoribose 1-diphosphate to form N'-(5'-phosphoribosyl)-ATP (PR-ATP). Has a crucial role in the pathway because the rate of histidine biosynthesis seems to be controlled primarily by regulation of HisG enzymatic activity. This Campylobacter jejuni subsp. jejuni serotype O:6 (strain 81116 / NCTC 11828) protein is ATP phosphoribosyltransferase.